The following is a 142-amino-acid chain: Hemoglobin subunit alpha (142 aa).

The region spanning 2–142 is the Globin domain; sequence VLSAADKTNV…VSTVLTSKYR (141 aa). S4 bears the Phosphoserine mark. K8 carries the N6-succinyllysine modification. Residue T9 is modified to Phosphothreonine. K12 carries the post-translational modification N6-succinyllysine. K17 carries the N6-acetyllysine; alternate modification. K17 bears the N6-succinyllysine; alternate mark. K41 carries the post-translational modification N6-succinyllysine. S50 carries the post-translational modification Phosphoserine. H59 serves as a coordination point for O2. Residue H88 participates in heme b binding. S103 is subject to Phosphoserine. Position 109 is a phosphothreonine (T109). Residue S125 is modified to Phosphoserine. A phosphothreonine mark is found at T135 and T138. S139 is subject to Phosphoserine.

Belongs to the globin family. As to quaternary structure, heterotetramer of two alpha chains and two beta chains. As to expression, red blood cells.

Functionally, involved in oxygen transport from the lung to the various peripheral tissues. Its function is as follows. Hemopressin acts as an antagonist peptide of the cannabinoid receptor CNR1. Hemopressin-binding efficiently blocks cannabinoid receptor CNR1 and subsequent signaling. In Equus zebra (Mountain zebra), this protein is Hemoglobin subunit alpha (HBA).